A 651-amino-acid chain; its full sequence is Threonine--tRNA ligase (651 aa).

The TGS domain maps to 1–64; that stretch reads MSSVVHVTLP…EKDCTLQVLT (64 aa). Positions 245–535 are catalytic; it reads DHRRLGPELG…LTEHYAGNFP (291 aa). The Zn(2+) site is built by Cys336, His387, and His512.

It belongs to the class-II aminoacyl-tRNA synthetase family. As to quaternary structure, homodimer. Requires Zn(2+) as cofactor.

Its subcellular location is the cytoplasm. The catalysed reaction is tRNA(Thr) + L-threonine + ATP = L-threonyl-tRNA(Thr) + AMP + diphosphate + H(+). Its function is as follows. Catalyzes the attachment of threonine to tRNA(Thr) in a two-step reaction: L-threonine is first activated by ATP to form Thr-AMP and then transferred to the acceptor end of tRNA(Thr). Also edits incorrectly charged L-seryl-tRNA(Thr). This chain is Threonine--tRNA ligase, found in Symbiobacterium thermophilum (strain DSM 24528 / JCM 14929 / IAM 14863 / T).